We begin with the raw amino-acid sequence, 115 residues long: MKPGIHPEYREIVFVDVSNNFSFKTRSTMSTRETIKWEDGNEYPLAKIETSSESHPFYTGTQKIMDTAGRVEKFRQKFGTKAVAKASGDGAAKTAEKKAAAAEAKAAEKPAKKKA.

Belongs to the bacterial ribosomal protein bL31 family. Type B subfamily. As to quaternary structure, part of the 50S ribosomal subunit.

The chain is Large ribosomal subunit protein bL31B from Polynucleobacter asymbioticus (strain DSM 18221 / CIP 109841 / QLW-P1DMWA-1) (Polynucleobacter necessarius subsp. asymbioticus).